Here is a 316-residue protein sequence, read N- to C-terminus: D-alanine--D-alanine ligase (316 aa).

Residues Lys107–Ile303 form the ATP-grasp domain. Ala133–Gln188 serves as a coordination point for ATP. Residues Asp256, Glu269, and Asn271 each contribute to the Mg(2+) site.

It belongs to the D-alanine--D-alanine ligase family. Requires Mg(2+) as cofactor. Mn(2+) serves as cofactor.

The protein resides in the cytoplasm. It carries out the reaction 2 D-alanine + ATP = D-alanyl-D-alanine + ADP + phosphate + H(+). Its pathway is cell wall biogenesis; peptidoglycan biosynthesis. In terms of biological role, cell wall formation. This Geobacter sulfurreducens (strain ATCC 51573 / DSM 12127 / PCA) protein is D-alanine--D-alanine ligase.